Reading from the N-terminus, the 435-residue chain is Glutamyl-tRNA(Gln) amidotransferase subunit D (435 aa).

The region spanning 91–419 (PDVSIISTGG…EMAREMMREN (329 aa)) is the Asparaginase/glutaminase domain. Catalysis depends on residues threonine 101, threonine 177, aspartate 178, and lysine 254.

Belongs to the asparaginase 1 family. GatD subfamily. Heterodimer of GatD and GatE.

The enzyme catalyses L-glutamyl-tRNA(Gln) + L-glutamine + ATP + H2O = L-glutaminyl-tRNA(Gln) + L-glutamate + ADP + phosphate + H(+). Its function is as follows. Allows the formation of correctly charged Gln-tRNA(Gln) through the transamidation of misacylated Glu-tRNA(Gln) in organisms which lack glutaminyl-tRNA synthetase. The reaction takes place in the presence of glutamine and ATP through an activated gamma-phospho-Glu-tRNA(Gln). The GatDE system is specific for glutamate and does not act on aspartate. The sequence is that of Glutamyl-tRNA(Gln) amidotransferase subunit D (gatD) from Methanothermobacter thermautotrophicus (strain ATCC 29096 / DSM 1053 / JCM 10044 / NBRC 100330 / Delta H) (Methanobacterium thermoautotrophicum).